The chain runs to 198 residues: Nucleoid occlusion factor SlmA (198 aa).

The HTH tetR-type domain occupies 10–70; the sequence is NRREEILQSL…SLIEFIEDSL (61 aa). A DNA-binding region (H-T-H motif) is located at residues 33-52; the sequence is TTAKLAASVGVSEAALYRHF. The stretch at 117–144 forms a coiled coil; it reads EQDRLQGRINQLFERIEAQLRQVLREKR.

It belongs to the nucleoid occlusion factor SlmA family. Homodimer. Interacts with FtsZ.

The protein localises to the cytoplasm. It is found in the nucleoid. Its function is as follows. Required for nucleoid occlusion (NO) phenomenon, which prevents Z-ring formation and cell division over the nucleoid. Acts as a DNA-associated cell division inhibitor that binds simultaneously chromosomal DNA and FtsZ, and disrupts the assembly of FtsZ polymers. SlmA-DNA-binding sequences (SBS) are dispersed on non-Ter regions of the chromosome, preventing FtsZ polymerization at these regions. The sequence is that of Nucleoid occlusion factor SlmA from Salmonella paratyphi A (strain ATCC 9150 / SARB42).